A 256-amino-acid chain; its full sequence is Acetyl-coenzyme A carboxylase carboxyl transferase subunit alpha (256 aa).

Residues M1–Q236 enclose the CoA carboxyltransferase C-terminal domain.

Belongs to the AccA family. In terms of assembly, acetyl-CoA carboxylase is a heterohexamer composed of biotin carboxyl carrier protein (AccB), biotin carboxylase (AccC) and two subunits each of ACCase subunit alpha (AccA) and ACCase subunit beta (AccD).

It localises to the cytoplasm. It catalyses the reaction N(6)-carboxybiotinyl-L-lysyl-[protein] + acetyl-CoA = N(6)-biotinyl-L-lysyl-[protein] + malonyl-CoA. The protein operates within lipid metabolism; malonyl-CoA biosynthesis; malonyl-CoA from acetyl-CoA: step 1/1. Functionally, component of the acetyl coenzyme A carboxylase (ACC) complex. First, biotin carboxylase catalyzes the carboxylation of biotin on its carrier protein (BCCP) and then the CO(2) group is transferred by the carboxyltransferase to acetyl-CoA to form malonyl-CoA. The chain is Acetyl-coenzyme A carboxylase carboxyl transferase subunit alpha from Streptococcus equi subsp. zooepidemicus (strain MGCS10565).